A 456-amino-acid polypeptide reads, in one-letter code: tRNA-2-methylthio-N(6)-dimethylallyladenosine synthase (456 aa).

The MTTase N-terminal domain occupies 3–120 (KKVYVKTFGC…LPQMIDQRRA (118 aa)). Cys-12, Cys-49, Cys-83, Cys-157, Cys-161, and Cys-164 together coordinate [4Fe-4S] cluster. One can recognise a Radical SAM core domain in the interval 143-377 (RIDGPSAFVS…QATIEENVQR (235 aa)). Residues 380–447 (QAMVGKVERI…PHSLRGELVM (68 aa)) enclose the TRAM domain.

The protein belongs to the methylthiotransferase family. MiaB subfamily. Monomer. [4Fe-4S] cluster is required as a cofactor.

Its subcellular location is the cytoplasm. The catalysed reaction is N(6)-dimethylallyladenosine(37) in tRNA + (sulfur carrier)-SH + AH2 + 2 S-adenosyl-L-methionine = 2-methylsulfanyl-N(6)-dimethylallyladenosine(37) in tRNA + (sulfur carrier)-H + 5'-deoxyadenosine + L-methionine + A + S-adenosyl-L-homocysteine + 2 H(+). In terms of biological role, catalyzes the methylthiolation of N6-(dimethylallyl)adenosine (i(6)A), leading to the formation of 2-methylthio-N6-(dimethylallyl)adenosine (ms(2)i(6)A) at position 37 in tRNAs that read codons beginning with uridine. The polypeptide is tRNA-2-methylthio-N(6)-dimethylallyladenosine synthase (Paraburkholderia phymatum (strain DSM 17167 / CIP 108236 / LMG 21445 / STM815) (Burkholderia phymatum)).